The following is a 202-amino-acid chain: MPKPTKGPRLGGSSSHQKALLANLATSLFEHGRIKTTEPKARALRPYAEKLITHAKKGTLHNRREVMKKIRDKDVVHVLFAEIGPFFADRSGGYTRIIKVENRKGDNAPMAVIELVREKTVTSEANRARRADAAQKAASAGAQEVTAAAAPQAAVEPEAVETEASAETAEAEVETAEVEAVDEASAEEADEATEVEKADDDK.

Positions 132-202 (DAAQKAASAG…TEVEKADDDK (71 aa)) are disordered. Positions 134–168 (AQKAASAGAQEVTAAAAPQAAVEPEAVETEASAET) are enriched in low complexity. A compositionally biased stretch (acidic residues) spans 169 to 193 (AEAEVETAEVEAVDEASAEEADEAT).

This sequence belongs to the bacterial ribosomal protein bL17 family. As to quaternary structure, part of the 50S ribosomal subunit. Contacts protein L32.

The polypeptide is Large ribosomal subunit protein bL17 (Mycolicibacterium vanbaalenii (strain DSM 7251 / JCM 13017 / BCRC 16820 / KCTC 9966 / NRRL B-24157 / PYR-1) (Mycobacterium vanbaalenii)).